Reading from the N-terminus, the 1104-residue chain is A disintegrin and metalloproteinase with thrombospondin motifs 10 (1104 aa).

Positions 1-25 are cleaved as a signal peptide; the sequence is MASACQILRWALALGLGLTFKVTHA. Residues 26–233 constitute a propeptide that is removed on maturation; it reads FRSQDELLSS…SERGQLGLKR (208 aa). Asn-90 and Asn-222 each carry an N-linked (GlcNAc...) asparagine glycan. In terms of domain architecture, Peptidase M12B spans 239 to 457; sequence RYVETLVVAD…GLGLCLNNRP (219 aa). Cystine bridges form between Cys-315/Cys-376, Cys-351/Cys-358, Cys-370/Cys-452, Cys-409/Cys-436, Cys-479/Cys-501, Cys-490/Cys-508, Cys-496/Cys-531, Cys-521/Cys-536, Cys-559/Cys-596, Cys-563/Cys-601, and Cys-574/Cys-586. His-392 is a Zn(2+) binding site. The active site involves Glu-393. 2 residues coordinate Zn(2+): His-396 and His-402. Residues 460-546 form the Disintegrin domain; sequence QDFVYPTVAP…VPFGSRPEGV (87 aa). The 56-residue stretch at 547–602 folds into the TSP type-1 1 domain; that stretch reads DGAWGPWTPWGDCSRSCGGGVSSSSRHCDSPRPTIGGKYCLGERRRHRSCNTNDCP. Residues 706-818 are spacer; the sequence is ETIEGVFSPA…PALHYRFNAP (113 aa). N-linked (GlcNAc...) asparagine glycans are attached at residues Asn-740 and Asn-795. 4 TSP type-1 domains span residues 825–885, 888–943, 944–1003, and 1004–1058; these read PPYS…EPCP, WVVG…QGPM, CPPE…RRCP, and PARW…AKCD. Cystine bridges form between Cys-837–Cys-879, Cys-841–Cys-884, and Cys-852–Cys-866. The N-linked (GlcNAc...) asparagine glycan is linked to Asn-892. One can recognise a PLAC domain in the interval 1066-1104; the sequence is GPEECKDVNKVAYCPLVLKFQFCSRAYFRQMCCKTCQGR.

Interacts with FBN1; this interaction promotes microfibrils assembly. Zn(2+) serves as cofactor. Post-translationally, glycosylated. Can be O-fucosylated by POFUT2 on a serine or a threonine residue found within the consensus sequence C1-X(2)-(S/T)-C2-G of the TSP type-1 repeat domains where C1 and C2 are the first and second cysteine residue of the repeat, respectively. Fucosylated repeats can then be further glycosylated by the addition of a beta-1,3-glucose residue by the glucosyltransferase, B3GALTL. Fucosylation mediates the efficient secretion of ADAMTS family members. Can also be C-glycosylated with one or two mannose molecules on tryptophan residues within the consensus sequence W-X-X-W of the TPRs, and N-glycosylated. These other glycosylations can also facilitate secretion. As to expression, widely expressed in adult tissues.

Its subcellular location is the secreted. It localises to the extracellular space. The protein localises to the extracellular matrix. Functionally, metalloprotease that participate in microfibrils assembly. Microfibrils are extracellular matrix components occurring independently or along with elastin in the formation of elastic tissues. The protein is A disintegrin and metalloproteinase with thrombospondin motifs 10 (Adamts10) of Mus musculus (Mouse).